Consider the following 1562-residue polypeptide: Pikromycin polyketide synthase component PikAIII (1562 aa).

Positions His-34 to Glu-464 constitute a Ketosynthase family 3 (KS3) domain. The interval Val-37–His-1475 is module 5. Cys-209 serves as the catalytic Acyl-thioester intermediate; for beta-ketoacyl synthase activity. Active-site for beta-ketoacyl synthase activity residues include His-344 and His-384. Positions Phe-565–Leu-866 are acyltransferase. Ser-655 functions as the Acyl-ester intermediate; for acyltransferase activity in the catalytic mechanism. The segment at Gly-1116–Ala-1293 is beta-ketoacyl reductase. NADP(+) contacts are provided by residues Thr-1124–Leu-1127, Ser-1147–Gly-1150, Asp-1176–Val-1177, Lys-1226, and Tyr-1248–Ser-1249. The active-site Acyl-ester intermediate; for beta-ketoacyl reductase activity is Tyr-1263. A Carrier domain is found at Pro-1403 to Tyr-1478. The residue at position 1438 (Ser-1438) is an O-(pantetheine 4'-phosphoryl)serine. The interval Gly-1519–Asp-1548 is disordered. Low complexity predominate over residues Gly-1532–Glu-1541.

As to quaternary structure, homodimer. Pikromycin PKS consists of a combination of multimodular (PikAI and PikAII) and monomodular (PikAIII and PikAIV) polypeptides each coding for a functional synthase subunit which participates in 1 (monomodular) or 2 (multimodular) of the six FAS-like elongation steps required for formation of the polyketide. Module 1, 2, 3, 4, 5, and 6 participating in biosynthesis steps 1, 2, 3, 4, 5, and 6, respectively. Pantetheine 4'-phosphate is required as a cofactor.

The catalysed reaction is 5 (S)-methylmalonyl-CoA + malonyl-CoA + 5 NADPH + 11 H(+) = 10-deoxymethynolide + 6 CO2 + 5 NADP(+) + 6 CoA + 2 H2O. It catalyses the reaction 6 (S)-methylmalonyl-CoA + malonyl-CoA + 5 NADPH + 12 H(+) = narbonolide + 7 CO2 + 5 NADP(+) + 7 CoA + 2 H2O. Its pathway is antibiotic biosynthesis. Involved in the biosynthesis of 12- and 14-membered ring macrolactone antibiotics such as methymycin and neomethymycin, and pikromycin and narbomycin, respectively. Component of the pikromycin PKS which catalyzes the biosynthesis of both precursors 10-deoxymethynolide (12-membered ring macrolactone) and narbonolide (14-membered ring macrolactone). Chain elongation through PikAI, PikAII and PikAIII followed by thioesterase catalyzed termination results in the production of 10-deoxymethynolide, while continued elongation through PikAIV, followed by thioesterase (TE) catalyzed cyclization results in the biosynthesis of the narbonolide. The protein is Pikromycin polyketide synthase component PikAIII of Streptomyces venezuelae.